The chain runs to 62 residues: uncharacterized protein (62 aa).

Residues 1–62 (MTSTQNLKDK…PPKKSLSQLP (62 aa)) form a disordered region. Positions 7–29 (LKDKFEEEIRQQKEGKGKKEKVW) are enriched in basic and acidic residues. A compositionally biased stretch (polar residues) spans 32–43 (HSDSSYNKQTAV).

This is an uncharacterized protein from Dictyostelium discoideum (Social amoeba).